We begin with the raw amino-acid sequence, 294 residues long: 4-hydroxy-tetrahydrodipicolinate synthase (294 aa).

Pyruvate is bound at residue Thr-46. Residue Tyr-135 is the Proton donor/acceptor of the active site. Lys-164 acts as the Schiff-base intermediate with substrate in catalysis. Ile-205 contributes to the pyruvate binding site.

Belongs to the DapA family. In terms of assembly, homotetramer; dimer of dimers.

It localises to the cytoplasm. The enzyme catalyses L-aspartate 4-semialdehyde + pyruvate = (2S,4S)-4-hydroxy-2,3,4,5-tetrahydrodipicolinate + H2O + H(+). The protein operates within amino-acid biosynthesis; L-lysine biosynthesis via DAP pathway; (S)-tetrahydrodipicolinate from L-aspartate: step 3/4. Functionally, catalyzes the condensation of (S)-aspartate-beta-semialdehyde [(S)-ASA] and pyruvate to 4-hydroxy-tetrahydrodipicolinate (HTPA). This Nitratiruptor sp. (strain SB155-2) protein is 4-hydroxy-tetrahydrodipicolinate synthase.